The following is a 184-amino-acid chain: MVRTLYAIGAVFLLTGFLLPTAEGRKRNRGSQGAIPPPDKDQPNDSEQMQTQQQSGSRHRERGKGTSMPAEEVLESSQEALHITERKYLKRDWCKTQPLKQTIHEEGCNSRTIINRFCYGQCNSFYIPRHVRKEEGSFQSCSFCKPKKFTTMTVTLNCPELQPPRKKKRITRVKECRCISIDLD.

The N-terminal stretch at 1–24 (MVRTLYAIGAVFLLTGFLLPTAEG) is a signal peptide. The tract at residues 24–77 (GRKRNRGSQGAIPPPDKDQPNDSEQMQTQQQSGSRHRERGKGTSMPAEEVLESS) is disordered. N-linked (GlcNAc...) asparagine glycosylation is present at Asn-44. A compositionally biased stretch (polar residues) spans 45–56 (DSEQMQTQQQSG). 4 cysteine pairs are disulfide-bonded: Cys-94-Cys-144, Cys-108-Cys-158, Cys-118-Cys-176, and Cys-122-Cys-178. In terms of domain architecture, CTCK spans 94 to 184 (CKTQPLKQTI…ECRCISIDLD (91 aa)).

Belongs to the DAN family.

The protein resides in the secreted. Its function is as follows. Cytokine that may play a role in the development of the medial pallium and during optic nerve and pecten development by modulating BMP signaling. The protein is Gremlin-1 (GREM1) of Gallus gallus (Chicken).